The following is a 387-amino-acid chain: MSYRMFDYLVPNVNFFGPNAISVVGERCQLLGGKKALLVTDKGLRAIKDGAVDKTLHYLREAGIEVAIFDGVEPNPKDTNVRDGLAVFRREQCDIIVTVGGGSPHDCGKGIGIAATHEGDLYQYAGIETLTNPLPPIVAVNTTAGTASEVTRHCVLTNTETKVKFVIVSWRNLPSVSINDPLLMIGKPAALTAATGMDALTHAVEAYISKDANPVTDAAAMQAIRLIARNLRQAVALGSNLQARENMAYASLLAGMAFNNANLGYVHAMAHQLGGLYDMPHGVANAVLLPHVARYNLIANPEKFADIAELMGENITGLSTLDAAEKAIAAITRLSMDIGIPQHLRDLGVKEADFPYMAEMALKDGNAFSNPRKGNEQEIAAIFRQAF.

The protein belongs to the iron-containing alcohol dehydrogenase family. As to quaternary structure, homooctamer. Requires Fe cation as cofactor.

The enzyme catalyses propane-1,3-diol + NAD(+) = 3-hydroxypropanal + NADH + H(+). In Klebsiella pneumoniae, this protein is 1,3-propanediol dehydrogenase (dhaT).